We begin with the raw amino-acid sequence, 393 residues long: Pyridoxamine--pyruvate transaminase (393 aa).

3 residues coordinate pyridoxal 5'-phosphate: Glu68, Tyr95, and Thr146. An N6-(pyridoxal phosphate)lysine modification is found at Lys197. Arg345 is a binding site for pyridoxal 5'-phosphate.

Belongs to the class-V pyridoxal-phosphate-dependent aminotransferase family. As to quaternary structure, homotetramer. Requires pyridoxal 5'-phosphate as cofactor.

The enzyme catalyses pyridoxamine + pyruvate = pyridoxal + L-alanine. Catalyzes a reversible transamination reaction between pyridoxamine and pyruvate to form pyridoxal and L-alanine. The chain is Pyridoxamine--pyruvate transaminase (ppaT) from Mesorhizobium japonicum (strain LMG 29417 / CECT 9101 / MAFF 303099) (Mesorhizobium loti (strain MAFF 303099)).